We begin with the raw amino-acid sequence, 267 residues long: Glutamate 5-kinase (267 aa).

Residue K15 participates in ATP binding. 3 residues coordinate substrate: S55, D142, and N158. ATP is bound by residues 178 to 179 and 220 to 226; these read SD and TGGMATK.

This sequence belongs to the glutamate 5-kinase family.

The protein localises to the cytoplasm. The enzyme catalyses L-glutamate + ATP = L-glutamyl 5-phosphate + ADP. It functions in the pathway amino-acid biosynthesis; L-proline biosynthesis; L-glutamate 5-semialdehyde from L-glutamate: step 1/2. Its function is as follows. Catalyzes the transfer of a phosphate group to glutamate to form L-glutamate 5-phosphate. The polypeptide is Glutamate 5-kinase (Ligilactobacillus salivarius (strain UCC118) (Lactobacillus salivarius)).